Reading from the N-terminus, the 328-residue chain is Ribosomal protein L11 methyltransferase (328 aa).

4 residues coordinate S-adenosyl-L-methionine: Thr-158, Gly-180, Asp-202, and Asn-246.

This sequence belongs to the methyltransferase superfamily. PrmA family.

The protein localises to the cytoplasm. It carries out the reaction L-lysyl-[protein] + 3 S-adenosyl-L-methionine = N(6),N(6),N(6)-trimethyl-L-lysyl-[protein] + 3 S-adenosyl-L-homocysteine + 3 H(+). Functionally, methylates ribosomal protein L11. This chain is Ribosomal protein L11 methyltransferase, found in Polynucleobacter necessarius subsp. necessarius (strain STIR1).